The following is a 133-amino-acid chain: uncharacterized protein (133 aa).

Residues 1-82 (MIDKIKKGYS…QKMLHDRQNF (82 aa)) constitute a DNA-binding region (recombinase).

This is an uncharacterized protein from Bacillus phage phi105 (Bacteriophage phi-105).